A 353-amino-acid polypeptide reads, in one-letter code: Farnesyl pyrophosphate synthase (353 aa).

The isopentenyl diphosphate site is built by Lys57, Arg60, and Gln96. At Lys57 the chain carries N6-(2-hydroxyisobutyryl)lysine; alternate. Lys57 bears the N6-acetyllysine; alternate mark. Positions 103 and 107 each coordinate Mg(2+). Residue Arg112 participates in dimethylallyl diphosphate binding. Arg113 contacts isopentenyl diphosphate. Residues Lys200, Thr201, Gln240, Lys257, and Lys266 each coordinate dimethylallyl diphosphate.

This sequence belongs to the FPP/GGPP synthase family. Homodimer. Interacts with RSAD2. Interacts with bovine leukemia virus (BLV) protein G4. The cofactor is Mg(2+).

It localises to the cytoplasm. The catalysed reaction is isopentenyl diphosphate + dimethylallyl diphosphate = (2E)-geranyl diphosphate + diphosphate. The enzyme catalyses isopentenyl diphosphate + (2E)-geranyl diphosphate = (2E,6E)-farnesyl diphosphate + diphosphate. It participates in isoprenoid biosynthesis; farnesyl diphosphate biosynthesis; farnesyl diphosphate from geranyl diphosphate and isopentenyl diphosphate: step 1/1. The protein operates within isoprenoid biosynthesis; geranyl diphosphate biosynthesis; geranyl diphosphate from dimethylallyl diphosphate and isopentenyl diphosphate: step 1/1. Inactivated by interferon-induced RSAD2. This inactivation may result of disruption of lipid rafts at the plasma membrane, and thus have an antiviral effect since many enveloped viruses need lipid rafts to bud efficiently out of the cell. Key enzyme in isoprenoid biosynthesis which catalyzes the formation of farnesyl diphosphate (FPP), a precursor for several classes of essential metabolites including sterols, dolichols, carotenoids, and ubiquinones. FPP also serves as substrate for protein farnesylation and geranylgeranylation. Catalyzes the sequential condensation of isopentenyl pyrophosphate with the allylic pyrophosphates, dimethylallyl pyrophosphate, and then with the resultant geranylpyrophosphate to the ultimate product farnesyl pyrophosphate. The chain is Farnesyl pyrophosphate synthase (FDPS) from Bos taurus (Bovine).